The sequence spans 200 residues: Small ribosomal subunit protein uS4 (200 aa).

Residues Thr22–Lys43 are disordered. One can recognise an S4 RNA-binding domain in the interval Gln92–Glu170.

Belongs to the universal ribosomal protein uS4 family. Part of the 30S ribosomal subunit. Contacts protein S5. The interaction surface between S4 and S5 is involved in control of translational fidelity.

Functionally, one of the primary rRNA binding proteins, it binds directly to 16S rRNA where it nucleates assembly of the body of the 30S subunit. With S5 and S12 plays an important role in translational accuracy. This chain is Small ribosomal subunit protein uS4, found in Listeria welshimeri serovar 6b (strain ATCC 35897 / DSM 20650 / CCUG 15529 / CIP 8149 / NCTC 11857 / SLCC 5334 / V8).